Consider the following 237-residue polypeptide: 5'-methylthioadenosine/S-adenosylhomocysteine nucleosidase (237 aa).

The active-site Proton acceptor is glutamate 12. Residues alanine 78, isoleucine 152, and 173 to 174 contribute to the substrate site; that span reads ME. The active-site Proton donor is the aspartate 197.

The protein belongs to the PNP/UDP phosphorylase family. MtnN subfamily. As to quaternary structure, homodimer.

The catalysed reaction is S-adenosyl-L-homocysteine + H2O = S-(5-deoxy-D-ribos-5-yl)-L-homocysteine + adenine. It catalyses the reaction S-methyl-5'-thioadenosine + H2O = 5-(methylsulfanyl)-D-ribose + adenine. The enzyme catalyses 5'-deoxyadenosine + H2O = 5-deoxy-D-ribose + adenine. Its pathway is amino-acid biosynthesis; L-methionine biosynthesis via salvage pathway; S-methyl-5-thio-alpha-D-ribose 1-phosphate from S-methyl-5'-thioadenosine (hydrolase route): step 1/2. Catalyzes the irreversible cleavage of the glycosidic bond in both 5'-methylthioadenosine (MTA) and S-adenosylhomocysteine (SAH/AdoHcy) to adenine and the corresponding thioribose, 5'-methylthioribose and S-ribosylhomocysteine, respectively. Also cleaves 5'-deoxyadenosine, a toxic by-product of radical S-adenosylmethionine (SAM) enzymes, into 5-deoxyribose and adenine. Thus, is required for in vivo function of the radical SAM enzymes biotin synthase and lipoic acid synthase, that are inhibited by 5'-deoxyadenosine accumulation. This chain is 5'-methylthioadenosine/S-adenosylhomocysteine nucleosidase, found in Hamiltonella defensa subsp. Acyrthosiphon pisum (strain 5AT).